The chain runs to 55 residues: Large ribosomal subunit protein bL33 (55 aa).

The protein belongs to the bacterial ribosomal protein bL33 family.

This is Large ribosomal subunit protein bL33 from Rhodopseudomonas palustris (strain BisB18).